The following is a 199-amino-acid chain: Hematopoietic prostaglandin D synthase (199 aa).

The GST N-terminal domain occupies 2 to 79; it reads PNYKLTYFNL…YLARESGLAG (78 aa). Residues tyrosine 8, arginine 14, tryptophan 39, 49–51, and 63–64 contribute to the glutathione site; these read GKV and QS. Residues 81–199 enclose the GST C-terminal domain; sequence TPVEQALADA…WIQKRPKTAI (119 aa).

It belongs to the GST superfamily. Sigma family. The cofactor is glutathione. In terms of tissue distribution, highly expressed in liver, kidney, small intestine and colon, moderately in pancreas, bone marrow, lung and ovary, and expressed at low levels in spleen, thymus, heart and brain. Not detected in oviduct or skin (at protein level). Expressed in liver.

It localises to the cytoplasm. The catalysed reaction is prostaglandin H2 = prostaglandin D2. It catalyses the reaction RX + glutathione = an S-substituted glutathione + a halide anion + H(+). The enzyme catalyses 2-glyceryl-prostaglandin H2 = 2-glyceryl-prostaglandin D2. Its function is as follows. Bifunctional enzyme which catalyzes both the conversion of PGH2 to PGD2, a prostaglandin involved in smooth muscle contraction/relaxation and a potent inhibitor of platelet aggregation, and the conjugation of glutathione with a wide range of aryl halides, organic isothiocyanates and alpha,beta-unsaturated carbonyls. Also exhibits low glutathione-peroxidase activity towards cumene hydroperoxide and t-butyl hydroperoxide. The polypeptide is Hematopoietic prostaglandin D synthase (HPGDS) (Gallus gallus (Chicken)).